The sequence spans 177 residues: Late embryogenesis abundant protein 1 (177 aa).

The interval 1 to 177 (MASHDQSYKA…DKDHFPTNRH (177 aa)) is disordered. A compositionally biased stretch (basic and acidic residues) spans 28-39 (IEDKAQAAKEKA). A compositionally biased stretch (low complexity) spans 40-89 (QQAAQTAKDKTSQTAQAAKEKTQQTAQAAKEKTQQTAQAAKDETQQTAQA). 4 consecutive repeat copies span residues 53–63 (TAQAAKEKTQQ), 64–74 (TAQAAKEKTQQ), 75–85 (TAQAAKDETQQ), and 86–96 (TAQAAKDKTQQ). Positions 53–96 (TAQAAKEKTQQTAQAAKEKTQQTAQAAKDETQQTAQAAKDKTQQ) are 4 X 11 AA approximate tandem repeats of T-A-Q-A-A-K-E-K-T-Q-Q. The span at 90 to 117 (AKDKTQQTTEATKEKAQDTTGRAREKGS) shows a compositional bias: basic and acidic residues. Polar residues predominate over residues 119-142 (MGQSTKETAQSGKDNSAGFLQQTG). Residues 164 to 177 (NDDKDKDHFPTNRH) show a composition bias toward basic and acidic residues.

Belongs to the LEA type 4 family. In terms of tissue distribution, highest expression is found in seeds. No expression detected in adult tissues.

This Cicer arietinum (Chickpea) protein is Late embryogenesis abundant protein 1.